The chain runs to 185 residues: uncharacterized protein (185 aa).

5 consecutive transmembrane segments (helical) span residues 4 to 24 (TYLT…SLSI), 54 to 74 (LALF…LKLI), 98 to 118 (LRMG…LLQN), 119 to 139 (VIWI…FTVY), and 153 to 173 (FILL…FIFI).

The protein resides in the cell membrane. This is an uncharacterized protein from Bacillus subtilis (strain 168).